A 919-amino-acid chain; its full sequence is Phosphoenolpyruvate carboxylase (919 aa).

Catalysis depends on residues His138 and Lys579.

Belongs to the PEPCase type 1 family. It depends on Mg(2+) as a cofactor.

It catalyses the reaction oxaloacetate + phosphate = phosphoenolpyruvate + hydrogencarbonate. In terms of biological role, forms oxaloacetate, a four-carbon dicarboxylic acid source for the tricarboxylic acid cycle. The sequence is that of Phosphoenolpyruvate carboxylase from Corynebacterium glutamicum (Brevibacterium saccharolyticum).